We begin with the raw amino-acid sequence, 480 residues long: Proline--tRNA ligase (480 aa).

It belongs to the class-II aminoacyl-tRNA synthetase family. ProS type 3 subfamily. Homodimer.

Its subcellular location is the cytoplasm. It catalyses the reaction tRNA(Pro) + L-proline + ATP = L-prolyl-tRNA(Pro) + AMP + diphosphate. In terms of biological role, catalyzes the attachment of proline to tRNA(Pro) in a two-step reaction: proline is first activated by ATP to form Pro-AMP and then transferred to the acceptor end of tRNA(Pro). This chain is Proline--tRNA ligase, found in Metallosphaera sedula (strain ATCC 51363 / DSM 5348 / JCM 9185 / NBRC 15509 / TH2).